The primary structure comprises 33 residues: MNLEILAQLTALAFIVVSGPLVIALLAFRKGNL.

A helical membrane pass occupies residues 5-25 (ILAQLTALAFIVVSGPLVIAL).

It belongs to the Psb30/Ycf12 family. In terms of assembly, PSII is composed of 1 copy each of membrane proteins PsbA, PsbB, PsbC, PsbD, PsbE, PsbF, PsbH, PsbI, PsbJ, PsbK, PsbL, PsbM, PsbT, PsbX, PsbY, PsbZ, Psb30/Ycf12, peripheral proteins of the oxygen-evolving complex and a large number of cofactors. It forms dimeric complexes.

The protein localises to the plastid. It localises to the chloroplast thylakoid membrane. A core subunit of photosystem II (PSII), probably helps stabilize the reaction center. This chain is Photosystem II reaction center protein Psb30, found in Chaetosphaeridium globosum (Charophycean green alga).